Consider the following 426-residue polypeptide: Mothers against decapentaplegic homolog 7 (426 aa).

The tract at residues 13-55 is disordered; it reads LWRSRAPGGEDEEEGAGGGGGGGELRGEGATDSRAHGAGGGGP. Residues 37–47 show a composition bias toward basic and acidic residues; it reads LRGEGATDSRA. N6-acetyllysine; alternate is present on residues lysine 64 and lysine 70. Glycyl lysine isopeptide (Lys-Gly) (interchain with G-Cter in ubiquitin); alternate cross-links involve residues lysine 64 and lysine 70. The MH1 domain occupies 64–207; it reads KAVRGAKGHH…LSRLCELESP (144 aa). Cysteine 125, cysteine 180, cysteine 192, and histidine 197 together coordinate Zn(2+). The PY-motif motif lies at 208-211; it reads PPPY. An important for interaction with SMURF2 region spans residues 208-217; that stretch reads PPPYSRYPMD. Serine 249 is modified (phosphoserine). Positions 261 to 426 constitute an MH2 domain; it reads WCVVAYWEEK…CWLEVIFNSR (166 aa).

The protein belongs to the dwarfin/SMAD family. In terms of assembly, interacts with WWP1. Interacts with COPS5. Interacts with NEDD4L. Interacts with STAMBP. Interacts with RNF111, AXIN1 and AXIN2. Interacts with PPP1R15A. Interacts (via MH2 domain) with EP300. Interacts with ACVR1B, SMURF1, SMURF2 and TGFBR1; SMAD7 recruits SMURF1 and SMURF2 to the TGF-beta receptor and regulates its degradation. Interacts with PDPK1 (via PH domain). Interacts with TSC22D1/TSC-22; the interaction requires TGF-beta and the interaction is inhibited by TGFBR1. In terms of processing, phosphorylation on Ser-249 does not affect its stability, nuclear localization or inhibitory function in TGFB signaling; however it affects its ability to regulate transcription. Phosphorylated by PDPK1. Post-translationally, ubiquitinated by WWP1. Polyubiquitinated by RNF111, which is enhanced by AXIN1 and promotes proteasomal degradation. In response to TGF-beta, ubiquitinated by SMURF1; which promotes its degradation. Acetylation prevents ubiquitination and degradation mediated by SMURF1. As to expression, ubiquitous with higher expression in the lung and vascular endothelium.

Its subcellular location is the nucleus. The protein resides in the cytoplasm. Antagonist of signaling by TGF-beta (transforming growth factor) type 1 receptor superfamily members; has been shown to inhibit TGF-beta (Transforming growth factor) and activin signaling by associating with their receptors thus preventing SMAD2 access. Functions as an adapter to recruit SMURF2 to the TGF-beta receptor complex. Also acts by recruiting the PPP1R15A-PP1 complex to TGFBR1, which promotes its dephosphorylation. Positively regulates PDPK1 kinase activity by stimulating its dissociation from the 14-3-3 protein YWHAQ which acts as a negative regulator. The protein is Mothers against decapentaplegic homolog 7 (SMAD7) of Homo sapiens (Human).